A 313-amino-acid polypeptide reads, in one-letter code: Tyrosine--tRNA ligase (313 aa).

L-tyrosine is bound at residue tyrosine 32. Residues 37–45 (PSGEIHLGH) carry the 'HIGH' region motif. Residues tyrosine 152, glutamine 156, aspartate 159, and glutamine 174 each coordinate L-tyrosine. The short motif at 208–212 (KMSSS) is the 'KMSKS' region element. An ATP-binding site is contributed by serine 211.

Belongs to the class-I aminoacyl-tRNA synthetase family. TyrS type 3 subfamily. In terms of assembly, homodimer.

Its subcellular location is the cytoplasm. The enzyme catalyses tRNA(Tyr) + L-tyrosine + ATP = L-tyrosyl-tRNA(Tyr) + AMP + diphosphate + H(+). Its function is as follows. Catalyzes the attachment of tyrosine to tRNA(Tyr) in a two-step reaction: tyrosine is first activated by ATP to form Tyr-AMP and then transferred to the acceptor end of tRNA(Tyr). This is Tyrosine--tRNA ligase from Methanospirillum hungatei JF-1 (strain ATCC 27890 / DSM 864 / NBRC 100397 / JF-1).